Consider the following 204-residue polypeptide: 3-isopropylmalate dehydratase small subunit (204 aa).

Belongs to the LeuD family. LeuD type 1 subfamily. As to quaternary structure, heterodimer of LeuC and LeuD.

The catalysed reaction is (2R,3S)-3-isopropylmalate = (2S)-2-isopropylmalate. The protein operates within amino-acid biosynthesis; L-leucine biosynthesis; L-leucine from 3-methyl-2-oxobutanoate: step 2/4. Its function is as follows. Catalyzes the isomerization between 2-isopropylmalate and 3-isopropylmalate, via the formation of 2-isopropylmaleate. The chain is 3-isopropylmalate dehydratase small subunit from Vesicomyosocius okutanii subsp. Calyptogena okutanii (strain HA).